The chain runs to 515 residues: Maturase K (515 aa).

This sequence belongs to the intron maturase 2 family. MatK subfamily.

The protein resides in the plastid. It is found in the chloroplast. Its function is as follows. Usually encoded in the trnK tRNA gene intron. Probably assists in splicing its own and other chloroplast group II introns. The sequence is that of Maturase K from Pinus koraiensis (Korean pine).